A 444-amino-acid chain; its full sequence is Xaa-Pro dipeptidase (444 aa).

Residues aspartate 247, aspartate 258, histidine 340, glutamate 385, and glutamate 424 each contribute to the Mn(2+) site.

This sequence belongs to the peptidase M24B family. Bacterial-type prolidase subfamily. The cofactor is Mn(2+).

It catalyses the reaction Xaa-L-Pro dipeptide + H2O = an L-alpha-amino acid + L-proline. In terms of biological role, splits dipeptides with a prolyl residue in the C-terminal position. This is Xaa-Pro dipeptidase from Photorhabdus laumondii subsp. laumondii (strain DSM 15139 / CIP 105565 / TT01) (Photorhabdus luminescens subsp. laumondii).